Consider the following 132-residue polypeptide: UPF0299 membrane protein YohJ (132 aa).

4 consecutive transmembrane segments (helical) span residues 5–25 (LNIIWQYLRAFVLIYACLYAG), 26–46 (IFIASLLPVTIPGSIIGMLIL), 63–83 (GCYVLIRYMALLFVPIGVGVM), and 93–113 (FGPVVVSCAVSTLVVFLVVSW).

This sequence belongs to the UPF0299 family.

Its subcellular location is the cell inner membrane. This is UPF0299 membrane protein YohJ from Shigella flexneri serotype 5b (strain 8401).